We begin with the raw amino-acid sequence, 277 residues long: Anamorsin homolog (277 aa).

The interval 1–160 (MDTKRMLQNS…NIGSSFALKK (160 aa)) is N-terminal SAM-like domain. The interval 161–188 (SIKSPVKVQNDDYSDLIDEDSLLTEEDL) is linker. Residues C199, C208, C211, and C213 each coordinate [2Fe-2S] cluster. Positions 199–213 (CEVGSTRKACKNCTC) are fe-S binding site A. Residues C238, C241, C249, and C252 each contribute to the [4Fe-4S] cluster site. 2 consecutive short sequence motifs (cx2C motif) follow at residues 238-241 (CGSC) and 249-252 (CGTC). The tract at residues 238 to 252 (CGSCGLGDAFRCGTC) is fe-S binding site B.

Belongs to the anamorsin family. As to quaternary structure, monomer. Requires [2Fe-2S] cluster as cofactor. The cofactor is [4Fe-4S] cluster.

It localises to the cytoplasm. Its subcellular location is the mitochondrion intermembrane space. Its function is as follows. Component of the cytosolic iron-sulfur (Fe-S) protein assembly (CIA) machinery. Required for the maturation of extramitochondrial Fe-S proteins. Part of an electron transfer chain functioning in an early step of cytosolic Fe-S biogenesis, facilitating the de novo assembly of a [4Fe-4S] cluster on the cytosolic Fe-S scaffold complex. Electrons are transferred from NADPH via a FAD- and FMN-containing diflavin oxidoreductase. Together with the diflavin oxidoreductase, also required for the assembly of the diferric tyrosyl radical cofactor of ribonucleotide reductase (RNR), probably by providing electrons for reduction during radical cofactor maturation in the catalytic small subunit. The chain is Anamorsin homolog from Populus trichocarpa (Western balsam poplar).